Here is a 461-residue protein sequence, read N- to C-terminus: Cyclic 2,3-diphosphoglycerate synthetase (461 aa).

It belongs to the cyclic 2,3-diphosphoglycerate synthetase family.

It is found in the cytoplasm. It catalyses the reaction (2R)-2,3-bisphosphoglycerate + ATP + H(+) = cyclic (2R)-2,3-bisphosphoglycerate + ADP + phosphate. In terms of biological role, catalyzes the formation of cyclic 2,3-diphosphoglycerate (cDPG) by formation of an intramolecular phosphoanhydride bond at the expense of ATP. This is Cyclic 2,3-diphosphoglycerate synthetase from Methanosphaera stadtmanae (strain ATCC 43021 / DSM 3091 / JCM 11832 / MCB-3).